A 342-amino-acid polypeptide reads, in one-letter code: Heat-inducible transcription repressor HrcA (342 aa).

The protein belongs to the HrcA family.

Functionally, negative regulator of class I heat shock genes (grpE-dnaK-dnaJ and groELS operons). Prevents heat-shock induction of these operons. This Oceanobacillus iheyensis (strain DSM 14371 / CIP 107618 / JCM 11309 / KCTC 3954 / HTE831) protein is Heat-inducible transcription repressor HrcA.